The chain runs to 559 residues: ATP synthase subunit beta-3, mitochondrial (559 aa).

Residues 1 to 28 (MASRRILSSLLRSSSSRSTSKSSLIGSR) are compositionally biased toward low complexity. The tract at residues 1–39 (MASRRILSSLLRSSSSRSTSKSSLIGSRNPRLLSPGPAH) is disordered. The transit peptide at 1-54 (MASRRILSSLLRSSSSRSTSKSSLIGSRNPRLLSPGPAHGAAPCGTLLGRVAEY) directs the protein to the mitochondrion. Serine 62 is subject to Phosphoserine. 234–241 (GGAGVGKT) provides a ligand contact to ATP.

It belongs to the ATPase alpha/beta chains family. As to quaternary structure, F-type ATPases have 2 components, CF(1) - the catalytic core - and CF(0) - the membrane proton channel. CF(1) has five subunits: alpha(3), beta(3), gamma(1), delta(1), epsilon(1). CF(0) has three main subunits: a, b and c.

The protein localises to the mitochondrion. The protein resides in the mitochondrion inner membrane. It carries out the reaction ATP + H2O + 4 H(+)(in) = ADP + phosphate + 5 H(+)(out). Mitochondrial membrane ATP synthase (F(1)F(0) ATP synthase or Complex V) produces ATP from ADP in the presence of a proton gradient across the membrane which is generated by electron transport complexes of the respiratory chain. F-type ATPases consist of two structural domains, F(1) - containing the extramembraneous catalytic core, and F(0) - containing the membrane proton channel, linked together by a central stalk and a peripheral stalk. During catalysis, ATP synthesis in the catalytic domain of F(1) is coupled via a rotary mechanism of the central stalk subunits to proton translocation. Subunits alpha and beta form the catalytic core in F(1). Rotation of the central stalk against the surrounding alpha(3)beta(3) subunits leads to hydrolysis of ATP in three separate catalytic sites on the beta subunits. The chain is ATP synthase subunit beta-3, mitochondrial from Arabidopsis thaliana (Mouse-ear cress).